The sequence spans 59 residues: UPF0181 protein YoaH (59 aa).

Belongs to the UPF0181 family.

The sequence is that of UPF0181 protein YoaH from Shigella sonnei (strain Ss046).